Reading from the N-terminus, the 366-residue chain is Sperm equatorial segment protein 1 (366 aa).

Residues 1 to 18 form the signal peptide; sequence MKFLVLLVALLLWPSSLP. Asparagine 129 is a glycosylation site (N-linked (GlcNAc...) asparagine). The disordered stretch occupies residues 139–204; the sequence is PFIEKDEPEP…EDVPQLSGDN (66 aa). A compositionally biased stretch (acidic residues) spans 144-157; that stretch reads DEPEPEPEPEPEPE. Residues 165 to 189 show a composition bias toward polar residues; that stretch reads APTQVPSVTEPSQDVTSLSGSTDLG.

This sequence belongs to the SPESP1 family. Glycosylated. In testis there are two predominant forms of 77- and 67-kDa and a form of 47-kDa, whereas in epididymal sperm from caput, corpus, and cauda there are two forms of 47- and 43-kDa. Testis forms contain complex carbohydrate residues. Epididymal sperm forms are N-glycosylated. Then undergoes significant glycosylation in the testis and that the majority of these glycoconjugates are removed by the time sperm reach the caput epididymis.

Its subcellular location is the cytoplasmic vesicle. The protein localises to the secretory vesicle. It is found in the acrosome. Involved in fertilization ability of sperm. The chain is Sperm equatorial segment protein 1 from Bos taurus (Bovine).